The following is a 147-amino-acid chain: Ubiquitin-conjugating enzyme E2-16 kDa (147 aa).

The 147-residue stretch at 1 to 147 folds into the UBC core domain; the sequence is MALKRINKEL…AREWTRKYAI (147 aa). Residue Cys107 is the Glycyl thioester intermediate of the active site.

This sequence belongs to the ubiquitin-conjugating enzyme family.

It carries out the reaction S-ubiquitinyl-[E1 ubiquitin-activating enzyme]-L-cysteine + [E2 ubiquitin-conjugating enzyme]-L-cysteine = [E1 ubiquitin-activating enzyme]-L-cysteine + S-ubiquitinyl-[E2 ubiquitin-conjugating enzyme]-L-cysteine.. Its pathway is protein modification; protein ubiquitination. Its function is as follows. Catalyzes the covalent attachment of ubiquitin to other proteins. This chain is Ubiquitin-conjugating enzyme E2-16 kDa (UBC1), found in Pyricularia oryzae (strain 70-15 / ATCC MYA-4617 / FGSC 8958) (Rice blast fungus).